Reading from the N-terminus, the 349-residue chain is Protein RecA (349 aa).

65–72 contributes to the ATP binding site; the sequence is GPESSGKT.

It belongs to the RecA family.

It localises to the cytoplasm. In terms of biological role, can catalyze the hydrolysis of ATP in the presence of single-stranded DNA, the ATP-dependent uptake of single-stranded DNA by duplex DNA, and the ATP-dependent hybridization of homologous single-stranded DNAs. It interacts with LexA causing its activation and leading to its autocatalytic cleavage. The protein is Protein RecA of Enterococcus faecium (Streptococcus faecium).